The following is a 549-amino-acid chain: Oxygen-dependent choline dehydrogenase (549 aa).

4 to 33 (DFVIIGSGSAGSAMAYRLSEDGRYSVIVIE) contributes to the FAD binding site. His-465 serves as the catalytic Proton acceptor.

This sequence belongs to the GMC oxidoreductase family. The cofactor is FAD.

The catalysed reaction is choline + A = betaine aldehyde + AH2. The enzyme catalyses betaine aldehyde + NAD(+) + H2O = glycine betaine + NADH + 2 H(+). The protein operates within amine and polyamine biosynthesis; betaine biosynthesis via choline pathway; betaine aldehyde from choline (cytochrome c reductase route): step 1/1. Functionally, involved in the biosynthesis of the osmoprotectant glycine betaine. Catalyzes the oxidation of choline to betaine aldehyde and betaine aldehyde to glycine betaine at the same rate. The sequence is that of Oxygen-dependent choline dehydrogenase from Brucella canis (strain ATCC 23365 / NCTC 10854 / RM-666).